Here is a 1036-residue protein sequence, read N- to C-terminus: Non-canonical non-ribosomal peptide synthetase FUB8 (1036 aa).

Residues 21–343 (EIARDEPDRV…LASVVTHPDE (323 aa)) are adenylation (A) domain. One can recognise a Carrier domain in the interval 544–621 (TTEDVVRSGI…QLAHTVWSHL (78 aa)). O-(pantetheine 4'-phosphoryl)serine is present on serine 579. The thioester reductase (TR) domain stretch occupies residues 658 to 899 (LTGTTGEIGS…IPIDLLTEVI (242 aa)).

Its pathway is mycotoxin biosynthesis. In terms of biological role, non-canonical non-ribosomal peptide synthetase; part of the gene cluster that mediates the biosynthesis of fusaric acid, a mycotoxin with low to moderate toxicity to animals and humans, but with high phytotoxic properties. L-aspartate is suggested as fusaric acid amino acid precursor that is activated and further processed to O-acetyl-L-homoserine by cluster enzymes aspartate kinase FUB3 and homoserine O-acetyltransferase FUB5, as well as enzymes of the primary metabolism. The polyketide synthase (PKS) FUB1 generates the triketide trans-2-hexenal which is presumptively released by the hydrolase FUB4 and linked to the NRPS-bound amino acid precursor by NAD(P)-dependent dehydrogenase FUB6. FUB1, FUB4, and the non-canonical NRPS Fub8 may form an enzyme complex. Further processing of the NRPS-bound intermediate might be carried out by FUB6 and the sulfhydrylase FUB7, enabling a spontaneous electrocyclization to close the carbon backbone of fusaric acid. Dihydrofusaric acid is likely to be released via reduction by the thioester reductase (TR) domain of FUB8 whereupon the final oxidation to fusaric acid may (also) be performed by the FMN-dependent dehydrogenase FUB9. The chain is Non-canonical non-ribosomal peptide synthetase FUB8 from Fusarium oxysporum f. sp. lycopersici (strain 4287 / CBS 123668 / FGSC 9935 / NRRL 34936) (Fusarium vascular wilt of tomato).